Here is a 352-residue protein sequence, read N- to C-terminus: Histidinol-phosphate aminotransferase (352 aa).

At lysine 211 the chain carries N6-(pyridoxal phosphate)lysine.

Belongs to the class-II pyridoxal-phosphate-dependent aminotransferase family. Histidinol-phosphate aminotransferase subfamily. Homodimer. Pyridoxal 5'-phosphate serves as cofactor.

It carries out the reaction L-histidinol phosphate + 2-oxoglutarate = 3-(imidazol-4-yl)-2-oxopropyl phosphate + L-glutamate. The protein operates within amino-acid biosynthesis; L-histidine biosynthesis; L-histidine from 5-phospho-alpha-D-ribose 1-diphosphate: step 7/9. The sequence is that of Histidinol-phosphate aminotransferase from Haemophilus influenzae (strain PittEE).